The primary structure comprises 913 residues: Tyrosine-protein phosphatase non-receptor type 3 (913 aa).

The FERM domain maps to 29–312 (VICSIRFLDG…EHHSFFQAKK (284 aa)). Phosphoserine is present on residues serine 357, serine 359, and serine 367. Disordered stretches follow at residues 364 to 400 (ETKS…DNLA) and 417 to 473 (KGPL…PDGV). Residue threonine 376 is modified to Phosphothreonine. Position 381 is a phosphoserine (serine 381). Basic residues predominate over residues 382–393 (PRLRHEIRKPRH). At serine 425 the chain carries Phosphoserine. Residues 441–453 (SENNPAQSCLTQK) show a composition bias toward polar residues. Positions 454-470 (SSSSVSPSSNAPGSCSP) are enriched in low complexity. One can recognise a PDZ domain in the interval 510–582 (LIRITPDEEG…DQVVMFIKAS (73 aa)). The Tyrosine-protein phosphatase domain occupies 646–901 (VLIQFEQLYR…KFVCEAILRV (256 aa)). Residues aspartate 811, 842 to 848 (CSAGIGR), and glutamine 886 each bind substrate. The Phosphocysteine intermediate role is filled by cysteine 842.

It belongs to the protein-tyrosine phosphatase family. Non-receptor class subfamily.

The protein localises to the cell membrane. Its subcellular location is the cytoplasm. It localises to the cytoskeleton. It carries out the reaction O-phospho-L-tyrosyl-[protein] + H2O = L-tyrosyl-[protein] + phosphate. May act at junctions between the membrane and the cytoskeleton. This Mus musculus (Mouse) protein is Tyrosine-protein phosphatase non-receptor type 3 (Ptpn3).